The chain runs to 757 residues: Palmitoyltransferase AKR1 (757 aa).

Polar residues-rich tracts occupy residues 1 to 20 (MSDI…STDP) and 36 to 46 (ESISSLQPIVS). Positions 1 to 54 (MSDINTESGESTSLPNSTDPPLSDVNIDVEDDDTAESISSLQPIVSNTTNPPEE) are disordered. The Cytoplasmic portion of the chain corresponds to 1-307 (MSDINTESGE…KLFKKSDHAK (307 aa)). 6 ANK repeats span residues 58 to 88 (PVLG…DLNT), 92 to 121 (GDIT…DVNA), 126 to 155 (LEAT…DPTM), 159 to 188 (QGFN…AKGI), 197 to 226 (KGRT…STKI), and 230 to 259 (GGFT…DFFL). A helical transmembrane segment spans residues 308–328 (VITFFVPLVALSIIFILFTHL). The Lumenal portion of the chain corresponds to 329 to 331 (HPL). The helical transmembrane segment at 332-352 (FALLISLIFGLAVNKALKELI) threads the bilayer. Residues 353 to 375 (LPSYSNYGLHSTSLLKSPFLSGT) are Cytoplasmic-facing. A helical transmembrane segment spans residues 376–396 (FFGSLLLLTIVWIFKIAPFTI). The Lumenal segment spans residues 397–402 (FKSRLL). The chain crosses the membrane as a helical span at residues 403-423 (TNFFMFLILMQIYYLFIKLIF). At 424–498 (SDPGCVPIET…YNDIGLKNHK (75 aa)) the chain is on the cytoplasmic side. The DHHC domain maps to 455-505 (NFCLETWIRKPLRSHFSTLNTHNVARFDHFCPWIYNDIGLKNHKNFMWFIL). The S-palmitoyl cysteine intermediate role is filled by Cys-485. Residues 499-519 (NFMWFILLTEVGIWFFISLTM) form a helical membrane-spanning segment. Residues 520 to 550 (KYFDILEDTNEDVACFLLGDDELCAGFVYDR) lie on the Lumenal side of the membrane. Residues 551 to 571 (FTFLIALWALIQSVWVGFLIV) form a helical membrane-spanning segment. At 572 to 757 (VQVFQTFTGV…YPEPTGPESV (186 aa)) the chain is on the cytoplasmic side. The segment at 614–647 (ELRNDDDDTAASRTGNNPNHSNGTTIPSEGSRIN) is disordered. The segment covering 624–646 (ASRTGNNPNHSNGTTIPSEGSRI) has biased composition (polar residues).

Belongs to the DHHC palmitoyltransferase family. AKR/ZDHHC17 subfamily.

It is found in the early endosome membrane. The protein localises to the golgi apparatus membrane. The catalysed reaction is L-cysteinyl-[protein] + hexadecanoyl-CoA = S-hexadecanoyl-L-cysteinyl-[protein] + CoA. In terms of biological role, palmitoyltransferase specific for casein kinase 1. This Naumovozyma castellii (Yeast) protein is Palmitoyltransferase AKR1 (AKR1).